A 344-amino-acid polypeptide reads, in one-letter code: Prickle-like protein 4 (344 aa).

Residues 1 to 81 form the PET domain; it reads MSPQGPAVLS…ARLVLPKLEG (81 aa). LIM zinc-binding domains follow at residues 82–147 and 148–207; these read HTCE…LLRP and RCPA…RYSD. The tract at residues 253 to 344 is disordered; sequence GSSLQTQRGL…NASKTHCTMC (92 aa). Positions 257-271 are enriched in polar residues; that stretch reads QTQRGLPGSSPQQEN. The span at 272–296 shows a compositional bias: basic and acidic residues; it reads RPGDKAEAPKGQEQCRLETIRDPKD. Over residues 322-344 the composition is skewed to polar residues; sequence SWKTPGSLQAEDSNASKTHCTMC.

Belongs to the prickle / espinas / testin family. Expressed in a broad range of normal tissues as well as in hepatocellular carcinoma, breast cancer and prostate cancer tissues.

This Homo sapiens (Human) protein is Prickle-like protein 4 (PRICKLE4).